A 260-amino-acid polypeptide reads, in one-letter code: Ribonuclease PH (260 aa).

Phosphate-binding positions include Arg-88 and 126–128 (GTR).

Belongs to the RNase PH family. As to quaternary structure, homohexameric ring arranged as a trimer of dimers.

It catalyses the reaction tRNA(n+1) + phosphate = tRNA(n) + a ribonucleoside 5'-diphosphate. Its function is as follows. Phosphorolytic 3'-5' exoribonuclease that plays an important role in tRNA 3'-end maturation. Removes nucleotide residues following the 3'-CCA terminus of tRNAs; can also add nucleotides to the ends of RNA molecules by using nucleoside diphosphates as substrates, but this may not be physiologically important. Probably plays a role in initiation of 16S rRNA degradation (leading to ribosome degradation) during starvation. The chain is Ribonuclease PH from Mycobacterium sp. (strain JLS).